We begin with the raw amino-acid sequence, 101 residues long: Small ribosomal subunit protein uS14A (101 aa).

The segment at A29 to H73 is disordered. Positions R61–P70 are enriched in basic and acidic residues.

This sequence belongs to the universal ribosomal protein uS14 family. In terms of assembly, part of the 30S ribosomal subunit. Contacts proteins S3 and S10.

In terms of biological role, binds 16S rRNA, required for the assembly of 30S particles and may also be responsible for determining the conformation of the 16S rRNA at the A site. The sequence is that of Small ribosomal subunit protein uS14A from Mycolicibacterium gilvum (strain PYR-GCK) (Mycobacterium gilvum (strain PYR-GCK)).